A 237-amino-acid polypeptide reads, in one-letter code: Leucyl/phenylalanyl-tRNA--protein transferase (237 aa).

This sequence belongs to the L/F-transferase family.

The protein resides in the cytoplasm. The catalysed reaction is N-terminal L-lysyl-[protein] + L-leucyl-tRNA(Leu) = N-terminal L-leucyl-L-lysyl-[protein] + tRNA(Leu) + H(+). The enzyme catalyses N-terminal L-arginyl-[protein] + L-leucyl-tRNA(Leu) = N-terminal L-leucyl-L-arginyl-[protein] + tRNA(Leu) + H(+). It carries out the reaction L-phenylalanyl-tRNA(Phe) + an N-terminal L-alpha-aminoacyl-[protein] = an N-terminal L-phenylalanyl-L-alpha-aminoacyl-[protein] + tRNA(Phe). Functions in the N-end rule pathway of protein degradation where it conjugates Leu, Phe and, less efficiently, Met from aminoacyl-tRNAs to the N-termini of proteins containing an N-terminal arginine or lysine. The chain is Leucyl/phenylalanyl-tRNA--protein transferase (aat) from Vibrio vulnificus (strain CMCP6).